Reading from the N-terminus, the 474-residue chain is Cell division protein FtsP (474 aa).

The tat-type signal signal peptide spans 1 to 27 (MSLSRRQFIQAAGLALGAGSLPLRAQA). In terms of domain architecture, Plastocyanin-like spans 229 to 288 (WVRLRLLNASNARRYTLQLSDGRPLYVVASDQGFLPAPVAVQQLSLAPGERREVVIDMSQ).

The protein belongs to the FtsP family. In terms of processing, predicted to be exported by the Tat system. The position of the signal peptide cleavage has not been experimentally proven.

It localises to the periplasm. Cell division protein that is required for growth during stress conditions. May be involved in protecting or stabilizing the divisomal assembly under conditions of stress. The protein is Cell division protein FtsP of Yersinia pestis.